We begin with the raw amino-acid sequence, 626 residues long: Glucoamylase (626 aa).

The first 19 residues, 1 to 19 (MHLVSSLLVVGAAFQAVLG), serve as a signal peptide directing secretion. The propeptide occupies 20–35 (LPDPLHEKRHSDIIKR). Residue Asn106 is glycosylated (N-linked (GlcNAc...) asparagine). Residue Trp155 participates in substrate binding. N-linked (GlcNAc...) asparagine glycosylation occurs at Asn206. Asp211 (proton acceptor) is an active-site residue. The active-site Proton donor is Glu214. Asn217 is a glycosylation site (N-linked (GlcNAc...) asparagine). A CBM20 domain is found at 520-626 (CAADHEVLVT…STATLDDTWR (107 aa)).

The protein belongs to the glycosyl hydrolase 15 family.

It carries out the reaction Hydrolysis of terminal (1-&gt;4)-linked alpha-D-glucose residues successively from non-reducing ends of the chains with release of beta-D-glucose.. The sequence is that of Glucoamylase (gla-1) from Neurospora crassa (strain ATCC 24698 / 74-OR23-1A / CBS 708.71 / DSM 1257 / FGSC 987).